The primary structure comprises 433 residues: Enolase (433 aa).

Position 167 (Gln167) interacts with (2R)-2-phosphoglycerate. The active-site Proton donor is the Glu209. 3 residues coordinate Mg(2+): Asp246, Glu291, and Asp318. (2R)-2-phosphoglycerate contacts are provided by Lys343, Arg372, Ser373, and Lys394. Residue Lys343 is the Proton acceptor of the active site.

The protein belongs to the enolase family. As to quaternary structure, component of the RNA degradosome, a multiprotein complex involved in RNA processing and mRNA degradation. It depends on Mg(2+) as a cofactor.

The protein resides in the cytoplasm. It is found in the secreted. It localises to the cell surface. It catalyses the reaction (2R)-2-phosphoglycerate = phosphoenolpyruvate + H2O. The protein operates within carbohydrate degradation; glycolysis; pyruvate from D-glyceraldehyde 3-phosphate: step 4/5. Functionally, catalyzes the reversible conversion of 2-phosphoglycerate (2-PG) into phosphoenolpyruvate (PEP). It is essential for the degradation of carbohydrates via glycolysis. In Shewanella frigidimarina (strain NCIMB 400), this protein is Enolase.